Reading from the N-terminus, the 600-residue chain is DNA polymerase alpha subunit B (600 aa).

The disordered stretch occupies residues 112–167 (AYTTPSKGPHKRVSSTPETPLTKRSISTRSPHQLLSPSSFSPSATPSQKYSSRTNR). Residues 125-140 (SSTPETPLTKRSISTR) are compositionally biased toward polar residues. Residue S126 is modified to Phosphoserine. Phosphothreonine occurs at positions 127 and 130. S141, S147, S152, and S154 each carry phosphoserine. Residues 141-158 (SPHQLLSPSSFSPSATPS) are compositionally biased toward low complexity.

It belongs to the DNA polymerase alpha subunit B family. As to quaternary structure, component of the alpha DNA polymerase complex (also known as the alpha DNA polymerase-primase complex) consisting of four subunits: the catalytic subunit POLA1, the regulatory subunit POLA2, and the primase complex subunits PRIM1 and PRIM2 respectively. Within the complex, POLA1 directly interacts with PRIM2. Post-translationally, phosphorylated in a cell cycle-dependent manner, in G2/M phase.

Its subcellular location is the nucleus. Its function is as follows. Accessory subunit of the DNA polymerase alpha complex (also known as the alpha DNA polymerase-primase complex) which plays an essential role in the initiation of DNA synthesis. During the S phase of the cell cycle, the DNA polymerase alpha complex (composed of a catalytic subunit POLA1, an accessory subunit POLA2 and two primase subunits, the catalytic subunit PRIM1 and the regulatory subunit PRIM2) is recruited to DNA at the replicative forks via direct interactions with MCM10 and WDHD1. The primase subunit of the polymerase alpha complex initiates DNA synthesis by oligomerising short RNA primers on both leading and lagging strands. These primers are initially extended by the polymerase alpha catalytic subunit and subsequently transferred to polymerase delta and polymerase epsilon for processive synthesis on the lagging and leading strand, respectively. In Rattus norvegicus (Rat), this protein is DNA polymerase alpha subunit B (Pola2).